Reading from the N-terminus, the 337-residue chain is Tryptophan--tRNA ligase (337 aa).

ATP-binding positions include 11 to 13 (QPT) and 19 to 20 (GN). The 'HIGH' region motif lies at 12–20 (PTGALHLGN). Asp-135 serves as a coordination point for L-tryptophan. Residues 147-149 (GED), Val-191, and 200-204 (KMSKS) contribute to the ATP site. The 'KMSKS' region motif lies at 200-204 (KMSKS).

Belongs to the class-I aminoacyl-tRNA synthetase family. Homodimer.

The protein resides in the cytoplasm. It catalyses the reaction tRNA(Trp) + L-tryptophan + ATP = L-tryptophyl-tRNA(Trp) + AMP + diphosphate + H(+). Catalyzes the attachment of tryptophan to tRNA(Trp). This chain is Tryptophan--tRNA ligase, found in Parasynechococcus marenigrum (strain WH8102).